A 476-amino-acid polypeptide reads, in one-letter code: RNA-splicing ligase RtcB homolog (476 aa).

Mn(2+) is bound by residues D90, C93, H198, H230, and H324. 197-201 (NHYAE) is a GMP binding site. Residues 324–325 (HN), 373–376 (GGTM), S380, 399–402 (HGAG), and K475 each bind GMP. The active-site GMP-histidine intermediate is the H399.

It belongs to the RtcB family. Catalytic component of the tRNA-splicing ligase complex. Mn(2+) serves as cofactor.

It carries out the reaction a 3'-end 3'-phospho-ribonucleotide-RNA + a 5'-end dephospho-ribonucleoside-RNA + GTP = a ribonucleotidyl-ribonucleotide-RNA + GMP + diphosphate. The catalysed reaction is a 3'-end 2',3'-cyclophospho-ribonucleotide-RNA + a 5'-end dephospho-ribonucleoside-RNA + GTP + H2O = a ribonucleotidyl-ribonucleotide-RNA + GMP + diphosphate + H(+). Its function is as follows. Catalytic subunit of the tRNA-splicing ligase complex that acts by directly joining spliced tRNA halves to mature-sized tRNAs by incorporating the precursor-derived splice junction phosphate into the mature tRNA as a canonical 3',5'-phosphodiester. May act as an RNA ligase with broad substrate specificity, and may function toward other RNAs. This is RNA-splicing ligase RtcB homolog from Chlamydomonas reinhardtii (Chlamydomonas smithii).